We begin with the raw amino-acid sequence, 311 residues long: Apolipoprotein E (311 aa).

The signal sequence occupies residues 1–18 (MKALWAVLLVTLLTGCLA). 8 tandem repeats follow at residues 72–93 (ALME…EQLG), 94–115 (PVAE…ARLG), 116–137 (ADME…TMLG), 138–159 (QSTE…KRLM), 160–181 (RDAE…EGAE), 182–203 (RGVS…QRTA), 204–225 (NLGA…DRIR), and 226–247 (GRLE…EHME). The tract at residues 72–247 (ALMEDTMTEV…RLEEVREHME (176 aa)) is 8 X 22 AA approximate tandem repeats. Met-135 is subject to Methionine sulfoxide. Ser-139 carries the phosphoserine modification. The tract at residues 150-160 (HLRKMRKRLMR) is LDL and other lipoprotein receptors binding. 154–157 (MRKR) provides a ligand contact to heparin. Positions 202-282 (TANLGAGAAQ…GWFEPIVEDM (81 aa)) are lipid-binding and lipoprotein association. Heparin is bound at residue 221–228 (GDRIRGRL). A homooligomerization region spans residues 258–311 (QQIRLQAEIFQARLKGWFEPIVEDMHRQWANLMEKIQASVATNPIITPVAQENQ). Residues 270–282 (RLKGWFEPIVEDM) form a specificity for association with VLDL region.

Belongs to the apolipoprotein A1/A4/E family. Homotetramer. May interact with ABCA1; functionally associated with ABCA1 in the biogenesis of HDLs. May interact with APP/A4 amyloid-beta peptide; the interaction is extremely stable in vitro but its physiological significance is unclear. May interact with MAPT. May interact with MAP2. In the cerebrospinal fluid, interacts with secreted SORL1. Interacts with PMEL; this allows the loading of PMEL luminal fragment on ILVs to induce fibril nucleation. APOE exists as multiple glycosylated and sialylated glycoforms within cells and in plasma. The extent of glycosylation and sialylation are tissue and context specific. Post-translationally, glycated in plasma VLDL. In terms of processing, phosphorylated by FAM20C in the extracellular medium.

The protein localises to the secreted. Its subcellular location is the extracellular space. The protein resides in the extracellular matrix. It localises to the extracellular vesicle. It is found in the endosome. The protein localises to the multivesicular body. Functionally, APOE is an apolipoprotein, a protein associating with lipid particles, that mainly functions in lipoprotein-mediated lipid transport between organs via the plasma and interstitial fluids. APOE is a core component of plasma lipoproteins and is involved in their production, conversion and clearance. Apolipoproteins are amphipathic molecules that interact both with lipids of the lipoprotein particle core and the aqueous environment of the plasma. As such, APOE associates with chylomicrons, chylomicron remnants, very low density lipoproteins (VLDL) and intermediate density lipoproteins (IDL) but shows a preferential binding to high-density lipoproteins (HDL). It also binds a wide range of cellular receptors including the LDL receptor/LDLR and the very low-density lipoprotein receptor/VLDLR that mediate the cellular uptake of the APOE-containing lipoprotein particles. Finally, APOE also has a heparin-binding activity and binds heparan-sulfate proteoglycans on the surface of cells, a property that supports the capture and the receptor-mediated uptake of APOE-containing lipoproteins by cells. The chain is Apolipoprotein E (Apoe) from Mus musculus (Mouse).